We begin with the raw amino-acid sequence, 306 residues long: Methionyl-tRNA formyltransferase (306 aa).

(6S)-5,6,7,8-tetrahydrofolate is bound at residue 110–113 (SLLP).

The protein belongs to the Fmt family.

It catalyses the reaction L-methionyl-tRNA(fMet) + (6R)-10-formyltetrahydrofolate = N-formyl-L-methionyl-tRNA(fMet) + (6S)-5,6,7,8-tetrahydrofolate + H(+). Its function is as follows. Attaches a formyl group to the free amino group of methionyl-tRNA(fMet). The formyl group appears to play a dual role in the initiator identity of N-formylmethionyl-tRNA by promoting its recognition by IF2 and preventing the misappropriation of this tRNA by the elongation apparatus. The protein is Methionyl-tRNA formyltransferase of Brucella suis (strain ATCC 23445 / NCTC 10510).